Here is a 325-residue protein sequence, read N- to C-terminus: L-lactate dehydrogenase 1 (325 aa).

NAD(+) contacts are provided by residues V17, D38, K43, Y68, and 82–83 (GA). Residues Q85, R91, and 123–126 (NPVD) each bind substrate. NAD(+)-binding positions include 121-123 (AAN) and S146. 151–154 (DTAR) lines the substrate pocket. Beta-D-fructose 1,6-bisphosphate-binding residues include R156 and H171. The active-site Proton acceptor is the H178. At Y223 the chain carries Phosphotyrosine. T232 serves as a coordination point for substrate.

It belongs to the LDH/MDH superfamily. LDH family. As to quaternary structure, homotetramer.

The protein localises to the cytoplasm. It carries out the reaction (S)-lactate + NAD(+) = pyruvate + NADH + H(+). Its pathway is fermentation; pyruvate fermentation to lactate; (S)-lactate from pyruvate: step 1/1. Its activity is regulated as follows. Allosterically activated by fructose 1,6-bisphosphate (FBP). In terms of biological role, catalyzes the conversion of lactate to pyruvate. The sequence is that of L-lactate dehydrogenase 1 from Lactococcus lactis subsp. lactis (strain IL1403) (Streptococcus lactis).